The sequence spans 239 residues: Tetraspanin-9 (239 aa).

Over 1–12 the chain is Cytoplasmic; the sequence is MARGCLCCVKYM. A helical transmembrane segment spans residues 13–33; sequence LFLFNLLFWLGGCGLLGVGVW. Topologically, residues 34 to 55 are extracellular; it reads LSVSQGSFATLSPSFPSISAAN. The helical transmembrane segment at 56-76 threads the bilayer; sequence LIITLGAVIMVTGFLGCLGAI. Over 77–85 the chain is Cytoplasmic; that stretch reads KENKCLLLS. The helical transmembrane segment at 86–106 threads the bilayer; it reads FFITLLVILLAELILLILFFV. The Extracellular portion of the chain corresponds to 107–203; the sequence is YTDNVSENAR…VEEWLDDNKH (97 aa). 2 N-linked (GlcNAc...) asparagine glycosylation sites follow: N110 and N180. A helical transmembrane segment spans residues 204–224; that stretch reads LLGTIAMCVLVIQLLGMAFSM. Residues 225 to 239 are Cytoplasmic-facing; that stretch reads TLYQQIHRSGKKYEA.

This sequence belongs to the tetraspanin (TM4SF) family.

The protein resides in the membrane. This Salmo salar (Atlantic salmon) protein is Tetraspanin-9 (tspan9).